The primary structure comprises 97 residues: Putative membrane protein insertion efficiency factor (97 aa).

Belongs to the UPF0161 family.

The protein localises to the cell inner membrane. Could be involved in insertion of integral membrane proteins into the membrane. This chain is Putative membrane protein insertion efficiency factor, found in Chlamydia muridarum (strain MoPn / Nigg).